An 86-amino-acid polypeptide reads, in one-letter code: Small ribosomal subunit protein bS16 (86 aa).

Belongs to the bacterial ribosomal protein bS16 family.

The polypeptide is Small ribosomal subunit protein bS16 (Borreliella afzelii (strain PKo) (Borrelia afzelii)).